The primary structure comprises 206 residues: Small ribosomal subunit protein uS4 (206 aa).

The S4 RNA-binding domain maps to 96 to 156 (SRLDNVVYRM…EKSRNQSRIA (61 aa)).

This sequence belongs to the universal ribosomal protein uS4 family. As to quaternary structure, part of the 30S ribosomal subunit. Contacts protein S5. The interaction surface between S4 and S5 is involved in control of translational fidelity.

In terms of biological role, one of the primary rRNA binding proteins, it binds directly to 16S rRNA where it nucleates assembly of the body of the 30S subunit. Its function is as follows. With S5 and S12 plays an important role in translational accuracy. This is Small ribosomal subunit protein uS4 from Hydrogenovibrio crunogenus (strain DSM 25203 / XCL-2) (Thiomicrospira crunogena).